Consider the following 593-residue polypeptide: RNA-binding protein 47 (593 aa).

The segment covering 1-20 (MTAEDSTAAMSSDSAAGSSA) has biased composition (low complexity). The disordered stretch occupies residues 1–25 (MTAEDSTAAMSSDSAAGSSAKVPEG). RRM domains follow at residues 71–149 (CEVF…CSVD), 151–233 (CRLF…WAEP), and 246–318 (KILY…LAKP). Arg332 bears the Omega-N-methylarginine mark. Arg394 and Arg405 each carry asymmetric dimethylarginine; alternate. Arg394 and Arg405 each carry omega-N-methylarginine; alternate.

The protein belongs to the RRM RBM47 family. As to quaternary structure, homodimer. Interacts with A1CF. Interacts with APOBEC1; form an mRNA editing complex. Interacts with RBPMS.

It localises to the nucleus. It is found in the cytoplasm. Functionally, single-stranded RNA-binding protein that functions in a variety of RNA processes, including alternative splicing, RNA stabilization, and RNA editing. Functions as an enzyme-substrate adapter for the cytidine deaminase APOBEC1. With APOBEC1 forms an mRNA editing complex involved into cytidine to uridine editing of a variety of mRNA molecules. Through the binding of their 3'UTR, also stabilizes a variety of mRNAs and regulates the expression of genes such as the interferon alpha/beta receptor and interleukin-10. Also involved in the alternative splicing of several genes including TJP1. Binds the pre-mRNA (U)GCAUG consensus sequences in downstream intronic regions of alternative exons, regulating their exclusion and inclusion into mRNAs. Independently of its RNA-binding activity, could negatively regulate MAVS by promoting its lysosomal degradation. This chain is RNA-binding protein 47, found in Homo sapiens (Human).